We begin with the raw amino-acid sequence, 120 residues long: Glycine cleavage system H protein (120 aa).

The Lipoyl-binding domain occupies 17–99 (VATVGITAHA…QGDGWLYRLK (83 aa)). At Lys58 the chain carries N6-lipoyllysine.

This sequence belongs to the GcvH family. The glycine cleavage system is composed of four proteins: P, T, L and H. It depends on (R)-lipoate as a cofactor.

The glycine cleavage system catalyzes the degradation of glycine. The H protein shuttles the methylamine group of glycine from the P protein to the T protein. The chain is Glycine cleavage system H protein from Methylorubrum extorquens (strain PA1) (Methylobacterium extorquens).